The chain runs to 208 residues: V-type ATP synthase subunit D (208 aa).

It belongs to the V-ATPase D subunit family.

Produces ATP from ADP in the presence of a proton gradient across the membrane. The chain is V-type ATP synthase subunit D from Streptococcus pyogenes serotype M49 (strain NZ131).